Reading from the N-terminus, the 1396-residue chain is ATP-binding cassette transporter pdr1 (1396 aa).

The tract at residues 1–22 (MSEQEKGKGDLDDPNSKNTKCP) is disordered. Residues 73 to 320 (LHPINIIFRT…FLDLGFIPAK (248 aa)) form the ABC transporter 1 domain. In terms of domain architecture, ABC transmembrane type-2 1 spans 412 to 622 (LQVFATAKVT…GYESIMLNEF (211 aa)). 6 helical membrane-spanning segments follow: residues 431–451 (YIATFVFTYVFQALMLGSLFY), 466–486 (VLSNAIVFTAIQTMSEVDIIF), 512–532 (LVEFPMRIVVVTMYDIIVYFL), 543–563 (FIFYLFTIVITFCMSAVFRFI), 572–592 (IAALIGGIGALVLIIFCGAVM), and 680–700 (GIILGFAIFILASSLILANFI). The ABC transporter 2 domain maps to 758–1001 (LCWRDLNFTV…LVNYFKRIHG (244 aa)). An ATP-binding site is contributed by 794-801 (GENKSGKS). In terms of domain architecture, ABC transmembrane type-2 2 spans 1071-1286 (FQIYKISMRN…FLEGMIGGVL (216 aa)). Helical transmembrane passes span 1095–1115 (VAFNIVAGLIIGFSFYKQGVG), 1166–1186 (FIIAFFLVEAVINCCFATLFF), 1208–1228 (FAWLMLMIFTLYYTTLGIGIA), 1245–1265 (FVFIQYFNGMIQLPGVIVGFW), and 1361–1381 (CIMIGYTAFNLGAAIALYYII).

Belongs to the ABC transporter superfamily. ABCG family. PDR (TC 3.A.1.205) subfamily.

The protein localises to the endoplasmic reticulum membrane. In Schizosaccharomyces pombe (strain 972 / ATCC 24843) (Fission yeast), this protein is ATP-binding cassette transporter pdr1 (pdr1).